Here is a 303-residue protein sequence, read N- to C-terminus: Cathepsin B-like CP1 (303 aa).

A signal peptide spans 1–19 (MALSLLLAVVCAKPLVSRA). N-linked (GlcNAc...) asparagine glycosylation is present at Asn41. 3 disulfides stabilise this stretch: Cys92-Cys119, Cys102-Cys145, and Cys138-Cys181. Residue Cys105 is part of the active site. Active-site residues include His249 and Asn270.

It belongs to the peptidase C1 family.

It localises to the vacuole. Thiol protease which is required for parasite excystation and invasion of the proximal small intestine of the human host. This Giardia intestinalis (Giardia lamblia) protein is Cathepsin B-like CP1 (CP1).